A 620-amino-acid chain; its full sequence is E3 ubiquitin-protein ligase DTX1 (620 aa).

WWE domains follow at residues 14–94 (GLGF…PVRR) and 95–171 (NFYD…RLRR). Disordered stretches follow at residues 221-248 (SQRR…LAVR), 262-313 (PAAG…SIPP), and 361-391 (PPVS…KSKN). 2 stretches are compositionally biased toward pro residues: residues 227 to 241 (PPAP…PGGP) and 268 to 280 (EPAP…PRSP). An SH3-binding motif is present at residues 230–233 (PPLP). Over residues 291-307 (QNNLNRPGPQRTTSVSA) the composition is skewed to polar residues. Positions 379-389 (RKTKKKHLKKS) are enriched in basic residues. The segment at 411–472 (CTICMERLVT…DGSLQCPTCK (62 aa)) adopts an RING-type zinc-finger fold.

The protein belongs to the Deltex family. In terms of assembly, homodimer. May form a heterodimer with other members of the Deltex family. Interacts with NOTCH1 via its N-terminal region and EIF3F, the interaction is required for NOTCH1 deubiquitination. Interacts with EP300. Forms a heterodimer with BBAP; the heterodimerization leading to an increase of in vitro ubiquitin ligase activity. Interacts with ITCH. Post-translationally, ubiquitinated; undergoes 'Lys-29'-linked polyubiquitination catalyzed by ITCH. Widely expressed. Strongly expressed in blood vessel. Also expressed in embryonic nervous system, pancreas, lung, adrenal gland, digestive tube and muscles. Expressed in MZB cells and developing B- and T-cells.

The protein resides in the cytoplasm. The protein localises to the nucleus. It carries out the reaction S-ubiquitinyl-[E2 ubiquitin-conjugating enzyme]-L-cysteine + [acceptor protein]-L-lysine = [E2 ubiquitin-conjugating enzyme]-L-cysteine + N(6)-ubiquitinyl-[acceptor protein]-L-lysine.. The protein operates within protein modification; protein ubiquitination. Functionally, functions as a ubiquitin ligase protein in vivo, mediating ubiquitination and promoting degradation of MEKK1, suggesting that it may regulate the Notch pathway via some ubiquitin ligase activity. Regulator of Notch signaling, a signaling pathway involved in cell-cell communications that regulates a broad spectrum of cell-fate determinations. Mainly acts as a positive regulator of Notch, but it also acts as a negative regulator, depending on the developmental and cell context. Mediates the antineural activity of Notch, possibly by inhibiting the transcriptional activation mediated by MATCH1. Involved in neurogenesis, lymphogenesis and myogenesis, and may also be involved in MZB (Marginal zone B) cell differentiation. Promotes B-cell development at the expense of T-cell development, suggesting that it can antagonize NOTCH1. The polypeptide is E3 ubiquitin-protein ligase DTX1 (DTX1) (Homo sapiens (Human)).